Here is an 843-residue protein sequence, read N- to C-terminus: Protein translocase subunit SecA 1 (843 aa).

Residues Q91, 109–113 (GEGKT), and D498 each bind ATP. Over residues 799–813 (EAKHVSAEDGKEKVK) the composition is skewed to basic and acidic residues. The disordered stretch occupies residues 799 to 826 (EAKHVSAEDGKEKVKPKPIVKGDQVGRN). Zn(2+) is bound by residues C829, C831, C840, and H841.

The protein belongs to the SecA family. Monomer and homodimer. Part of the essential Sec protein translocation apparatus which comprises SecA, SecYEG and auxiliary proteins SecDF. Other proteins may also be involved. It depends on Zn(2+) as a cofactor.

The protein resides in the cell membrane. It is found in the cytoplasm. The catalysed reaction is ATP + H2O + cellular proteinSide 1 = ADP + phosphate + cellular proteinSide 2.. Its function is as follows. Part of the Sec protein translocase complex. Interacts with the SecYEG preprotein conducting channel. Has a central role in coupling the hydrolysis of ATP to the transfer of proteins into and across the cell membrane, serving as an ATP-driven molecular motor driving the stepwise translocation of polypeptide chains across the membrane. The chain is Protein translocase subunit SecA 1 from Staphylococcus aureus (strain N315).